The chain runs to 130 residues: Small ribosomal subunit protein eS6 (130 aa).

This sequence belongs to the eukaryotic ribosomal protein eS6 family.

This Methanosphaera stadtmanae (strain ATCC 43021 / DSM 3091 / JCM 11832 / MCB-3) protein is Small ribosomal subunit protein eS6.